We begin with the raw amino-acid sequence, 2053 residues long: Cell adhesion molecule DSCAML1 (2053 aa).

The signal sequence occupies residues 1–18 (MWLVTFLLLLDSLHKARP). Ig-like C2-type domains follow at residues 19–119 (EDVG…NIRI), 115–217 (PNIR…ARLS), 226–310 (PTIL…GILT), 314–396 (PLHV…QTAQ), 408–501 (PRIV…ARIN), 506–586 (PSIR…LSIS), 596–685 (PPLI…RQLI), 690–784 (PRFV…MFLT), and 788–885 (PAMI…LTVQ). The Extracellular segment spans residues 19–1591 (EDVGTSLYFV…AQGEGDDVKK (1573 aa)). Disulfide bonds link cysteine 47–cysteine 103, cysteine 146–cysteine 198, cysteine 247–cysteine 294, cysteine 336–cysteine 386, cysteine 429–cysteine 485, cysteine 526–cysteine 575, and cysteine 617–cysteine 669. An N-linked (GlcNAc...) asparagine glycan is attached at asparagine 79. Residues asparagine 368 and asparagine 471 are each glycosylated (N-linked (GlcNAc...) asparagine). N-linked (GlcNAc...) asparagine glycans are attached at residues asparagine 666 and asparagine 710. A disulfide bridge connects residues cysteine 711 and cysteine 767. The N-linked (GlcNAc...) asparagine glycan is linked to asparagine 809. Residues cysteine 810 and cysteine 867 are joined by a disulfide bond. 4 Fibronectin type-III domains span residues 887 to 984 (PPDP…TEEA), 989 to 1088 (PPMD…TLED), 1093 to 1189 (PPEN…TKED), and 1193 to 1288 (PPAG…AGKA). Residues asparagine 1144 and asparagine 1162 are each glycosylated (N-linked (GlcNAc...) asparagine). Positions 1278–1377 (EKVTIEPAGK…TGGFDTIIVN (100 aa)) constitute an Ig-like C2-type 10 domain. Cysteine 1311 and cysteine 1363 are oxidised to a cystine. Residue asparagine 1345 is glycosylated (N-linked (GlcNAc...) asparagine). 2 Fibronectin type-III domains span residues 1383 to 1477 (PPDQ…THGR) and 1478 to 1578 (EPSF…TIPP). N-linked (GlcNAc...) asparagine glycosylation occurs at asparagine 1561. A helical transmembrane segment spans residues 1592–1612 (LFTIGCPVILATLGVALLFVV). Over 1613-2053 (RKKRKEKRLK…GAYSKSYTLV (441 aa)) the chain is Cytoplasmic. 4 disordered regions span residues 1716–1741 (LIDM…HSTR), 1773–1803 (HGVT…STES), 1840–1862 (SSDQ…STPS), and 1974–2053 (LAMP…YTLV). The segment covering 1732 to 1741 (KNVKSAHSTR) has biased composition (basic residues). Polar residues predominate over residues 1773 to 1789 (HGVTVTESDSYSASLSQ). Residues 1977 to 1993 (PAPPAGTAPPAPGPTPS) are compositionally biased toward pro residues.

In terms of assembly, homodimer; mediates homophilic interactions to promote cell adhesion. In the retina, expressed in the rod photoreceptors, AII amacrine cells and rod bipolar cells (at protein level).

The protein localises to the cell membrane. It is found in the synapse. In terms of biological role, cell adhesion molecule that plays a role in neuronal self-avoidance. Promotes repulsion between specific neuronal processes of either the same cell or the same subtype of cells. Promotes both isoneuronal self-avoidance for creating an orderly neurite arborization in retinal rod bipolar cells and heteroneuronal self-avoidance to maintain mosaic spacing between AII amacrine cells. Adhesion molecule that promotes lamina-specific synaptic connections in the retina: expressed in specific subsets of interneurons and retinal ganglion cells (RGCs) and promotes synaptic connectivity via homophilic interactions. The protein is Cell adhesion molecule DSCAML1 (Dscaml1) of Mus musculus (Mouse).